The primary structure comprises 290 residues: ATP synthase gamma chain (290 aa).

Belongs to the ATPase gamma chain family. As to quaternary structure, F-type ATPases have 2 components, CF(1) - the catalytic core - and CF(0) - the membrane proton channel. CF(1) has five subunits: alpha(3), beta(3), gamma(1), delta(1), epsilon(1). CF(0) has three main subunits: a, b and c.

Its subcellular location is the cell membrane. Functionally, produces ATP from ADP in the presence of a proton gradient across the membrane. The gamma chain is believed to be important in regulating ATPase activity and the flow of protons through the CF(0) complex. The sequence is that of ATP synthase gamma chain from Akkermansia muciniphila (strain ATCC BAA-835 / DSM 22959 / JCM 33894 / BCRC 81048 / CCUG 64013 / CIP 107961 / Muc).